A 61-amino-acid polypeptide reads, in one-letter code: Large ribosomal subunit protein uL30 (61 aa).

The protein belongs to the universal ribosomal protein uL30 family. Part of the 50S ribosomal subunit.

The protein is Large ribosomal subunit protein uL30 of Marinomonas sp. (strain MWYL1).